We begin with the raw amino-acid sequence, 405 residues long: Cytoplasmic 60S subunit biogenesis factor ZNF622 (405 aa).

2 U1-type zinc fingers span residues 4-28 and 67-91; these read YTCI…TDWH and TYCT…SKKH. A disordered region spans residues 135–230; sequence AIRAQPSSSP…GVEEEEEKQA (96 aa). Over residues 194-228 the composition is skewed to acidic residues; it reads AEEEEDSEEGWEEMDSDEDLGSEEEMEGVEEEEEK.

The protein belongs to the REI1 family. In terms of assembly, homo- and heterodimer. Associates with pre-60S ribosomal particles. In terms of tissue distribution, mainly expressed in the ovary. Mainly expressed in the testis.

It is found in the cytoplasm. Its subcellular location is the nucleus. In terms of biological role, pre-60S-associated cytoplasmic factor involved in the cytoplasmic maturation of the 60S subunit. The polypeptide is Cytoplasmic 60S subunit biogenesis factor ZNF622 (ZNF622) (Gallus gallus (Chicken)).